Reading from the N-terminus, the 353-residue chain is Photosystem II D2 protein (353 aa).

Threonine 2 is subject to N-acetylthreonine. Residue threonine 2 is modified to Phosphothreonine. The helical transmembrane segment at 41 to 61 (CAYFALGGWFTGTTFVTSWYT) threads the bilayer. Histidine 118 contacts chlorophyll a. Residues 125–141 (GFMLRQFELARSVQLRP) traverse the membrane as a helical segment. The pheophytin a site is built by glutamine 130 and asparagine 143. Residues 153–166 (VFVSVFLIYPLGQS) traverse the membrane as a helical segment. Histidine 198 contributes to the chlorophyll a binding site. A helical membrane pass occupies residues 208 to 228 (AALLCAIHGATVENLYFEDGD). Residues histidine 215 and phenylalanine 262 each contribute to the a plastoquinone site. Histidine 215 contributes to the Fe cation binding site. Histidine 269 lines the Fe cation pocket. The helical transmembrane segment at 279–295 (GLWMSALGVVGLALNLR) threads the bilayer.

The protein belongs to the reaction center PufL/M/PsbA/D family. As to quaternary structure, PSII is composed of 1 copy each of membrane proteins PsbA, PsbB, PsbC, PsbD, PsbE, PsbF, PsbH, PsbI, PsbJ, PsbK, PsbL, PsbM, PsbT, PsbX, PsbY, PsbZ, Psb30/Ycf12, at least 3 peripheral proteins of the oxygen-evolving complex and a large number of cofactors. It forms dimeric complexes. The D1/D2 heterodimer binds P680, chlorophylls that are the primary electron donor of PSII, and subsequent electron acceptors. It shares a non-heme iron and each subunit binds pheophytin, quinone, additional chlorophylls, carotenoids and lipids. There is also a Cl(-1) ion associated with D1 and D2, which is required for oxygen evolution. The PSII complex binds additional chlorophylls, carotenoids and specific lipids. serves as cofactor.

It is found in the plastid. The protein localises to the chloroplast thylakoid membrane. The enzyme catalyses 2 a plastoquinone + 4 hnu + 2 H2O = 2 a plastoquinol + O2. Its function is as follows. Photosystem II (PSII) is a light-driven water:plastoquinone oxidoreductase that uses light energy to abstract electrons from H(2)O, generating O(2) and a proton gradient subsequently used for ATP formation. It consists of a core antenna complex that captures photons, and an electron transfer chain that converts photonic excitation into a charge separation. The D1/D2 (PsbA/PsbD) reaction center heterodimer binds P680, the primary electron donor of PSII as well as several subsequent electron acceptors. D2 is needed for assembly of a stable PSII complex. The protein is Photosystem II D2 protein of Panax ginseng (Korean ginseng).